Here is a 287-residue protein sequence, read N- to C-terminus: Putative DNA-3-methyladenine glycosylase YfjP (287 aa).

Asp242 (proton acceptor) is an active-site residue.

Belongs to the alkylbase DNA glycosidase AlkA family.

It carries out the reaction Hydrolysis of alkylated DNA, releasing 3-methyladenine, 3-methylguanine, 7-methylguanine and 7-methyladenine.. Functionally, hydrolysis of the deoxyribose N-glycosidic bond to excise 3-methyladenine, 3-methylguanine, 7-methylguanine, O2-methylthymine, and O2-methylcytosine from the damaged DNA polymer formed by alkylation lesions. In Bacillus subtilis (strain 168), this protein is Putative DNA-3-methyladenine glycosylase YfjP (yfjP).